A 123-amino-acid chain; its full sequence is Small ribosomal subunit protein uS12 (123 aa).

Asp-89 bears the 3-methylthioaspartic acid mark.

It belongs to the universal ribosomal protein uS12 family. Part of the 30S ribosomal subunit. Contacts proteins S8 and S17. May interact with IF1 in the 30S initiation complex.

In terms of biological role, with S4 and S5 plays an important role in translational accuracy. Functionally, interacts with and stabilizes bases of the 16S rRNA that are involved in tRNA selection in the A site and with the mRNA backbone. Located at the interface of the 30S and 50S subunits, it traverses the body of the 30S subunit contacting proteins on the other side and probably holding the rRNA structure together. The combined cluster of proteins S8, S12 and S17 appears to hold together the shoulder and platform of the 30S subunit. The sequence is that of Small ribosomal subunit protein uS12 from Desulfovibrio desulfuricans (strain ATCC 27774 / DSM 6949 / MB).